The chain runs to 460 residues: V-type ATP synthase beta chain (460 aa).

This sequence belongs to the ATPase alpha/beta chains family.

In terms of biological role, produces ATP from ADP in the presence of a proton gradient across the membrane. The V-type beta chain is a regulatory subunit. The polypeptide is V-type ATP synthase beta chain (Thermotoga neapolitana (strain ATCC 49049 / DSM 4359 / NBRC 107923 / NS-E)).